The following is a 334-amino-acid chain: HTH-type transcriptional repressor PurR (334 aa).

The HTH lacI-type domain maps to 2-56 (ATIKDVARLAGVSTTTVSHVINKTRFVAEATQEKVNKAVDELNYAPSAVARSLKC). The segment at residues 4 to 23 (IKDVARLAGVSTTTVSHVIN) is a DNA-binding region (H-T-H motif). The DNA-binding element occupies 48-56 (SAVARSLKC). Residues Phe-73, Lys-189, Phe-220, and Asp-274 each contribute to the hypoxanthine site.

In terms of assembly, homodimer.

It functions in the pathway purine metabolism; purine nucleotide biosynthesis [regulation]. Its function is as follows. Is the main repressor of the genes involved in the de novo synthesis of purine nucleotides, regulating purB, purC, purEK, purF, purHD, purL, purMN and guaBA expression. PurR is allosterically activated to bind its cognate DNA by binding the purine corepressors, hypoxanthine or guanine, thereby effecting transcription repression. The chain is HTH-type transcriptional repressor PurR from Vibrio atlanticus (strain LGP32) (Vibrio splendidus (strain Mel32)).